Reading from the N-terminus, the 142-residue chain is uncharacterized protein (142 aa).

This is an uncharacterized protein from Gallid herpesvirus 2 (strain GA) (GaHV-2).